The following is a 305-amino-acid chain: Protoheme IX farnesyltransferase 1 (305 aa).

The next 8 helical transmembrane spans lie at 22-42, 53-73, 94-114, 115-135, 154-174, 179-199, 230-250, and 283-303; these read IKTG…TLAL, IPEI…AGAF, VTGD…TIFG, LVFL…GLFL, IGSV…YPDV, IIGL…AIAI, LVIL…LMLV, and LFHM…GIFF.

Belongs to the UbiA prenyltransferase family. Protoheme IX farnesyltransferase subfamily. As to quaternary structure, interacts with CtaA.

The protein localises to the cell membrane. The enzyme catalyses heme b + (2E,6E)-farnesyl diphosphate + H2O = Fe(II)-heme o + diphosphate. It participates in porphyrin-containing compound metabolism; heme O biosynthesis; heme O from protoheme: step 1/1. Converts heme B (protoheme IX) to heme O by substitution of the vinyl group on carbon 2 of heme B porphyrin ring with a hydroxyethyl farnesyl side group. The protein is Protoheme IX farnesyltransferase 1 of Bacillus cytotoxicus (strain DSM 22905 / CIP 110041 / 391-98 / NVH 391-98).